We begin with the raw amino-acid sequence, 213 residues long: Imidazoleglycerol-phosphate dehydratase (213 aa).

It belongs to the imidazoleglycerol-phosphate dehydratase family.

Its subcellular location is the cytoplasm. It carries out the reaction D-erythro-1-(imidazol-4-yl)glycerol 3-phosphate = 3-(imidazol-4-yl)-2-oxopropyl phosphate + H2O. Its pathway is amino-acid biosynthesis; L-histidine biosynthesis; L-histidine from 5-phospho-alpha-D-ribose 1-diphosphate: step 6/9. The polypeptide is Imidazoleglycerol-phosphate dehydratase (Trichodesmium erythraeum (strain IMS101)).